A 166-amino-acid chain; its full sequence is Large ribosomal subunit protein uL10 (166 aa).

The protein belongs to the universal ribosomal protein uL10 family. In terms of assembly, part of the ribosomal stalk of the 50S ribosomal subunit. The N-terminus interacts with L11 and the large rRNA to form the base of the stalk. The C-terminus forms an elongated spine to which L12 dimers bind in a sequential fashion forming a multimeric L10(L12)X complex.

Forms part of the ribosomal stalk, playing a central role in the interaction of the ribosome with GTP-bound translation factors. This is Large ribosomal subunit protein uL10 from Lysinibacillus sphaericus (strain C3-41).